We begin with the raw amino-acid sequence, 351 residues long: Ion-translocating oxidoreductase complex subunit D (351 aa).

The next 4 helical transmembrane spans lie at 18-38, 40-60, 87-107, and 121-141; these read IMLL…YFFG, GSLI…GAVL, LPPL…IVIA, and PAMV…TSWL. The residue at position 185 (Thr185) is an FMN phosphoryl threonine. The next 5 membrane-spanning stretches (helical) occupy residues 211–231, 241–261, 264–284, 298–318, and 320–340; these read VLAG…GLLL, IPVS…MIAP, FASP…FFIA, LIFG…GGYP, and GVAF…HYTQ.

The protein belongs to the NqrB/RnfD family. In terms of assembly, the complex is composed of six subunits: RnfA, RnfB, RnfC, RnfD, RnfE and RnfG. Requires FMN as cofactor.

Its subcellular location is the cell inner membrane. Functionally, part of a membrane-bound complex that couples electron transfer with translocation of ions across the membrane. The polypeptide is Ion-translocating oxidoreductase complex subunit D (Yersinia pseudotuberculosis serotype I (strain IP32953)).